We begin with the raw amino-acid sequence, 387 residues long: MTEFELPPKYITAANDLRSDTFTTPTAEMMEAALEASIGDAVYGEDVDTVRLEQTVARMAGKEAGLFCVSGTLSNQIAIRTHLMQPPYSILCDYRAHVYTHEAAGLAILSQAMVVPVVPSNGDYLTLEDIKSHYVPDDGDIHGAPTRLISLENTLHGIVYPLEELVRIKAWCMENGLKLHCDGARIWNAAAQSGVPLKQYGEIFDSISICLSKSMGAPIGSVLVGNLKFVKKATHFRKQQGGGIRQSGMMARMALVNINNDWKSQLLYSHSLAHELAEYCEAKGIPLESPADTNFVFINLKAARMDPDVLVKKGLKYNVKLMGGRVSFHYQVTRDTLEKVKLAISEAFDYAKEHPFDCNGPTQIYRSESTEVDVDGNAIREIKTYKY.

N6-(pyridoxal phosphate)lysine is present on lysine 213. Residue lysine 228 forms a Glycyl lysine isopeptide (Lys-Gly) (interchain with G-Cter in ubiquitin) linkage. A phosphoserine mark is found at serine 367 and serine 369. Threonine 370 is subject to Phosphothreonine.

Belongs to the threonine aldolase family. As to quaternary structure, homotetramer. Pyridoxal 5'-phosphate serves as cofactor.

The enzyme catalyses L-threonine = acetaldehyde + glycine. It carries out the reaction L-allo-threonine = acetaldehyde + glycine. The protein operates within amino-acid biosynthesis; glycine biosynthesis; glycine from L-allo-threonine: step 1/1. Its pathway is amino-acid degradation; L-threonine degradation via aldolase pathway; acetaldehyde and glycine from L-threonine: step 1/1. Its function is as follows. Catalyzes the cleavage of L-allo-threonine and L-threonine to glycine and acetaldehyde. This chain is Low specificity L-threonine aldolase (GLY1), found in Saccharomyces cerevisiae (strain ATCC 204508 / S288c) (Baker's yeast).